A 53-amino-acid chain; its full sequence is Photosystem II reaction center protein K (53 aa).

The propeptide occupies Met-1–Ala-16. The helical transmembrane segment at Leu-28 to Ala-48 threads the bilayer.

Belongs to the PsbK family. As to quaternary structure, PSII is composed of 1 copy each of membrane proteins PsbA, PsbB, PsbC, PsbD, PsbE, PsbF, PsbH, PsbI, PsbJ, PsbK, PsbL, PsbM, PsbT, PsbY, PsbZ, Psb30/Ycf12, at least 3 peripheral proteins of the oxygen-evolving complex and a large number of cofactors. It forms dimeric complexes.

The protein localises to the plastid. It is found in the chloroplast thylakoid membrane. One of the components of the core complex of photosystem II (PSII). PSII is a light-driven water:plastoquinone oxidoreductase that uses light energy to abstract electrons from H(2)O, generating O(2) and a proton gradient subsequently used for ATP formation. It consists of a core antenna complex that captures photons, and an electron transfer chain that converts photonic excitation into a charge separation. This Euglena anabaena (Euglenaria anabaena) protein is Photosystem II reaction center protein K.